A 306-amino-acid polypeptide reads, in one-letter code: Protoheme IX farnesyltransferase (306 aa).

A run of 9 helical transmembrane segments spans residues 28–48 (LGLV…AIML), 53–73 (FLSS…IMAG), 105–125 (ASIL…LFTI), 127–147 (IETG…YSVW), 156–176 (TIIG…AIEP), 182–202 (AWML…ALAI), 227–244 (LSML…FFMQ), 246–266 (LGTV…LLAI), and 283–303 (FVYS…VTLI).

This sequence belongs to the UbiA prenyltransferase family. Protoheme IX farnesyltransferase subfamily. Interacts with CtaA.

It localises to the cell membrane. It carries out the reaction heme b + (2E,6E)-farnesyl diphosphate + H2O = Fe(II)-heme o + diphosphate. It participates in porphyrin-containing compound metabolism; heme O biosynthesis; heme O from protoheme: step 1/1. Its function is as follows. Converts heme B (protoheme IX) to heme O by substitution of the vinyl group on carbon 2 of heme B porphyrin ring with a hydroxyethyl farnesyl side group. This Macrococcus caseolyticus (strain JCSC5402) (Macrococcoides caseolyticum) protein is Protoheme IX farnesyltransferase.